A 204-amino-acid chain; its full sequence is Casparian strip membrane protein 2 (204 aa).

Residues 1–41 are Cytoplasmic-facing; it reads MKNESTFIDVPADSSSAMKGKAPLIGVAKDHTASGSGGYNR. A helical membrane pass occupies residues 42–62; that stretch reads GLSIFDFLLRLAAIVAASVAA. The Extracellular portion of the chain corresponds to 63–92; it reads GTMFTSDETLPFFTQFLQFEAGYDDLPTFQ. A helical transmembrane segment spans residues 93 to 113; that stretch reads FFVIAMSLVSGYIVLSLPISV. Topologically, residues 114–125 are cytoplasmic; the sequence is VTIVRPLAAAPR. The helical transmembrane segment at 126–146 threads the bilayer; it reads LLLLVLDTAVMGLTMAAASSA. The Extracellular segment spans residues 147–178; that stretch reads AAISYVAHNGNQNTNWLPICQQFFDFCQKTSG. The helical transmembrane segment at 179–199 threads the bilayer; that stretch reads AVVSSFVAVVFFMILVVLSGV. Over 200–204 the chain is Cytoplasmic; the sequence is ALERH.

It belongs to the Casparian strip membrane proteins (CASP) family. In terms of assembly, homodimer and heterodimers.

It is found in the cell membrane. In terms of biological role, regulates membrane-cell wall junctions and localized cell wall deposition. Required for establishment of the Casparian strip membrane domain (CSD) and the subsequent formation of Casparian strips, a cell wall modification of the root endodermis that determines an apoplastic barrier between the intraorganismal apoplasm and the extraorganismal apoplasm and prevents lateral diffusion. The polypeptide is Casparian strip membrane protein 2 (Raphanus sativus (Radish)).